The sequence spans 287 residues: Lys-63-specific deubiquitinase (287 aa).

The 144-residue stretch at 33-176 (VHLESDAFLV…YTCFQSVQAQ (144 aa)) folds into the MPN domain. Residues histidine 119, histidine 121, and aspartate 132 each coordinate Zn(2+). The JAMM motif signature appears at 119–132 (HSHPHITVWPSHVD). The stretch at 256 to 283 (LQWLEDRLEQNKQSIITLQKEKELLTQE) forms a coiled coil.

The protein belongs to the peptidase M67A family. BRCC36 subfamily. As to quaternary structure, monomer. Homodimer. Component of the BRISC complex, at least composed of abraxas2, brcc3, babam1 and babam2. Interacts with abraxas2; the interaction is direct and may form a heterotetramer. Component of the BRCA1-A complex. Both the BRCA1-A complex and the BRISC complex bind polyubiquitin. Requires Zn(2+) as cofactor.

The protein resides in the nucleus. It localises to the cytoplasm. It is found in the cytoskeleton. Its subcellular location is the spindle pole. Its function is as follows. Metalloprotease that specifically cleaves 'Lys-63'-linked polyubiquitin chains, leaving the last ubiquitin chain attached to its substrates. Catalytic subunit of the BRISC complex, a multiprotein complex that specifically cleaves 'Lys-63'-linked ubiquitin in various substrates; brcc3 does not have activity by itself, but needs to be associated into a higher-order assembly, for minimal in vitro activity. The sequence is that of Lys-63-specific deubiquitinase from Danio rerio (Zebrafish).